The following is a 287-amino-acid chain: Pantothenate synthetase (287 aa).

30-37 (MGNLHSGH) is a binding site for ATP. Residue histidine 37 is the Proton donor of the active site. Glutamine 61 provides a ligand contact to (R)-pantoate. Position 61 (glutamine 61) interacts with beta-alanine. 149 to 152 (GEKD) is an ATP binding site. Residue glutamine 155 coordinates (R)-pantoate. ATP contacts are provided by residues valine 178 and 186-189 (LSSR).

The protein belongs to the pantothenate synthetase family. As to quaternary structure, homodimer.

It localises to the cytoplasm. It catalyses the reaction (R)-pantoate + beta-alanine + ATP = (R)-pantothenate + AMP + diphosphate + H(+). It functions in the pathway cofactor biosynthesis; (R)-pantothenate biosynthesis; (R)-pantothenate from (R)-pantoate and beta-alanine: step 1/1. Its function is as follows. Catalyzes the condensation of pantoate with beta-alanine in an ATP-dependent reaction via a pantoyl-adenylate intermediate. The sequence is that of Pantothenate synthetase from Pseudomonas putida (strain W619).